Here is a 121-residue protein sequence, read N- to C-terminus: Nitrogenase-stabilizing/protective protein NifW (121 aa).

This sequence belongs to the NifW family. Homotrimer; associates with NifD.

Functionally, may protect the nitrogenase Fe-Mo protein from oxidative damage. The protein is Nitrogenase-stabilizing/protective protein NifW of Methylacidiphilum infernorum (isolate V4) (Methylokorus infernorum (strain V4)).